We begin with the raw amino-acid sequence, 610 residues long: MGNTCVGPSRNGFLQSVSAAMWRPRDGDDSASMSNGDIASEAVSGELRSRLSDEVQNKPPEQVTMPKPGTDVETKDREIRTESKPETLEEISLESKPETKQETKSETKPESKPDPPAKPKKPKHMKRVSSAGLRTESVLQRKTENFKEFYSLGRKLGQGQFGTTFLCVEKTTGKEFACKSIAKRKLLTDEDVEDVRREIQIMHHLAGHPNVISIKGAYEDVVAVHLVMECCAGGELFDRIIQRGHYTERKAAELTRTIVGVVEACHSLGVMHRDLKPENFLFVSKHEDSLLKTIDFGLSMFFKPDDVFTDVVGSPYYVAPEVLRKRYGPEADVWSAGVIVYILLSGVPPFWAETEQGIFEQVLHGDLDFSSDPWPSISESAKDLVRKMLVRDPKKRLTAHQVLCHPWVQVDGVAPDKPLDSAVLSRMKQFSAMNKFKKMALRVIAESLSEEEIAGLKEMFNMIDADKSGQITFEELKAGLKRVGANLKESEILDLMQAADVDNSGTIDYKEFIAATLHLNKIEREDHLFAAFTYFDKDGSGYITPDELQQACEEFGVEDVRIEELMRDVDQDNDGRIDYNEFVAMMQKGSITGGPVKMGLEKSFSIALKL.

A lipid anchor (N-myristoyl glycine) is attached at Gly-2. Cys-5 is lipidated: S-palmitoyl cysteine. The segment at 17-133 (VSAAMWRPRD…HMKRVSSAGL (117 aa)) is disordered. 2 stretches are compositionally biased toward basic and acidic residues: residues 47 to 56 (LRSRLSDEVQ) and 70 to 117 (TDVE…DPPA). A compositionally biased stretch (basic residues) spans 118-127 (KPKKPKHMKR). Residues 150–408 (YSLGRKLGQG…AHQVLCHPWV (259 aa)) form the Protein kinase domain. ATP is bound by residues 156–164 (LGQGQFGTT) and Lys-179. Asp-274 serves as the catalytic Proton acceptor. Ser-314 carries the phosphoserine modification. The interval 414–444 (APDKPLDSAVLSRMKQFSAMNKFKKMALRVI) is autoinhibitory domain. 4 EF-hand domains span residues 451–486 (EEIAGLKEMFNMIDADKSGQITFEELKAGLKRVGAN), 487–522 (LKESEILDLMQAADVDNSGTIDYKEFIAATLHLNKI), 523–558 (EREDHLFAAFTYFDKDGSGYITPDELQQACEEFGVE), and 559–592 (DVRIEELMRDVDQDNDGRIDYNEFVAMMQKGSIT). Ca(2+) contacts are provided by Asp-464, Asp-466, Ser-468, Gln-470, Glu-475, Asp-500, Asp-502, Ser-504, Thr-506, Glu-511, Asp-536, Asp-538, Ser-540, Tyr-542, Glu-547, Asp-570, Asp-572, Asp-574, Arg-576, and Glu-581.

This sequence belongs to the protein kinase superfamily. Ser/Thr protein kinase family. CDPK subfamily. In terms of assembly, interacts with 14-3-3 proteins.

The protein localises to the peroxisome membrane. It carries out the reaction L-seryl-[protein] + ATP = O-phospho-L-seryl-[protein] + ADP + H(+). The enzyme catalyses L-threonyl-[protein] + ATP = O-phospho-L-threonyl-[protein] + ADP + H(+). Its activity is regulated as follows. Activated by calcium. Autophosphorylation may play an important role in the regulation of the kinase activity. Functionally, may play a role in signal transduction pathways that involve calcium as a second messenger. Phosphorylates the Ca(2+)-ATPase ACA2 resulting in the inhibition of its calcium activation. The chain is Calcium-dependent protein kinase 1 (CPK1) from Arabidopsis thaliana (Mouse-ear cress).